A 121-amino-acid polypeptide reads, in one-letter code: MQYVYIFIGGALGALLRYLISFLNTDGGFPIGTLIANLTGAFVMGLLTALTIAFFSNHPTLKKAITTGFLGALTTFSTFQLELIHMFDHQQFITLLLYAVTSYVFGILLCYVGIKLGGGLS.

A run of 4 helical transmembrane segments spans residues 3 to 23 (YVYI…ISFL), 35 to 55 (IANL…IAFF), 64 to 84 (AITT…LELI), and 92 to 112 (FITL…LCYV). Gly71 and Thr74 together coordinate Na(+).

This sequence belongs to the fluoride channel Fluc/FEX (TC 1.A.43) family.

The protein localises to the cell membrane. It carries out the reaction fluoride(in) = fluoride(out). With respect to regulation, na(+) is not transported, but it plays an essential structural role and its presence is essential for fluoride channel function. Its function is as follows. Fluoride-specific ion channel. Important for reducing fluoride concentration in the cell, thus reducing its toxicity. The sequence is that of Fluoride-specific ion channel FluC 1 from Staphylococcus aureus (strain NCTC 8325 / PS 47).